A 328-amino-acid chain; its full sequence is DNA-directed RNA polymerase subunit alpha (328 aa).

The alpha N-terminal domain (alpha-NTD) stretch occupies residues M1–S231. An alpha C-terminal domain (alpha-CTD) region spans residues D247–G328.

Belongs to the RNA polymerase alpha chain family. In terms of assembly, homodimer. The RNAP catalytic core consists of 2 alpha, 1 beta, 1 beta' and 1 omega subunit. When a sigma factor is associated with the core the holoenzyme is formed, which can initiate transcription.

The catalysed reaction is RNA(n) + a ribonucleoside 5'-triphosphate = RNA(n+1) + diphosphate. Functionally, DNA-dependent RNA polymerase catalyzes the transcription of DNA into RNA using the four ribonucleoside triphosphates as substrates. The sequence is that of DNA-directed RNA polymerase subunit alpha from Chlorobaculum tepidum (strain ATCC 49652 / DSM 12025 / NBRC 103806 / TLS) (Chlorobium tepidum).